The following is a 364-amino-acid chain: Chorismate synthase (364 aa).

Positions 48 and 54 each coordinate NADP(+). FMN is bound by residues 125 to 127 (RSS), 238 to 239 (NA), glycine 278, 293 to 297 (KPTSS), and arginine 319.

It belongs to the chorismate synthase family. As to quaternary structure, homotetramer. The cofactor is FMNH2.

The catalysed reaction is 5-O-(1-carboxyvinyl)-3-phosphoshikimate = chorismate + phosphate. The protein operates within metabolic intermediate biosynthesis; chorismate biosynthesis; chorismate from D-erythrose 4-phosphate and phosphoenolpyruvate: step 7/7. In terms of biological role, catalyzes the anti-1,4-elimination of the C-3 phosphate and the C-6 proR hydrogen from 5-enolpyruvylshikimate-3-phosphate (EPSP) to yield chorismate, which is the branch point compound that serves as the starting substrate for the three terminal pathways of aromatic amino acid biosynthesis. This reaction introduces a second double bond into the aromatic ring system. The protein is Chorismate synthase of Shewanella frigidimarina (strain NCIMB 400).